A 636-amino-acid chain; its full sequence is Zinc finger protein 90 (636 aa).

A KRAB domain is found at 14–85 (VTFKDVAVNF…EKEIQRPFCP (72 aa)). 7 C2H2-type zinc fingers span residues 208–230 (YKCD…EKIH), 250–272 (HECA…QRIH), 278–300 (FECN…ENAH), 306–328 (YQCS…QRIH), 334–356 (YRCN…EVTH), 362–384 (FQCK…ERTH), and 390–412 (FECS…MRIH). A disordered region spans residues 227–247 (EKIHKGDPYSNGTDQGAQSGR). A Glycyl lysine isopeptide (Lys-Gly) (interchain with G-Cter in SUMO2) cross-link involves residue lysine 444. 6 C2H2-type zinc fingers span residues 446–468 (YHCN…QRLH), 494–516 (YQCN…HRIH), 522–544 (YECN…ERTH), 550–572 (YECI…ERTH), 578–600 (YECN…QRTH), and 606–628 (YACK…HRVH).

This sequence belongs to the krueppel C2H2-type zinc-finger protein family. In terms of assembly, interacts (via N- and C-termini) with REST (via zinc-finger DNA-binding domain); the interaction inhibits REST repressor activity. Brain, spleen, thymus, and testis. Expressed in heart.

The protein localises to the nucleus. Functionally, inhibits the transcriptional repressor activity of REST by inhibiting its binding to DNA, thereby derepressing transcription of REST target genes. The chain is Zinc finger protein 90 (Zfp90) from Mus musculus (Mouse).